Consider the following 206-residue polypeptide: Protein MIS12 homolog (206 aa).

The stretch at 102-206 (DKCQETNPFS…EKESRRLETQ (105 aa)) forms a coiled coil.

This sequence belongs to the mis12 family. In terms of assembly, component of the MIS12 complex composed of MIS12, DSN1, NSL1 and PMF1. Also interacts with KNL1, CBX3, CBX5, NDC80 and ZWINT.

Its subcellular location is the chromosome. It is found in the centromere. The protein resides in the kinetochore. Its function is as follows. Part of the MIS12 complex which is required for normal chromosome alignment and segregation and for kinetochore formation during mitosis. Essential for proper kinetochore microtubule attachments. The chain is Protein MIS12 homolog from Mus musculus (Mouse).